The chain runs to 482 residues: MNIVLAASEAFPFCKTGGLADVTGSLAKELSKHKGNRVILFLPHYRNINRVASLKVVPGTFLIPIGDRLETASLSYISWGNVLVFFINNTKYFDRPELYRTAAGDYFDNDERFIFFNRAVLESCKFIGYRPDIIHAHDWQAGLLPAYLKTVYKTDAFFTRTRSLFTIHNMAYQGQYPYSTFIKTGFHTVDYVPERFEYYGGISYLKSGIVYADYVNTVSPNYAKEITLDEKMGFGMEGLLRSRQDTFCGILNGLDTGVWDPEHDPLIPYSYESFSPVKGKAACKQFLQNMLGLEVSPSKPLVGIVSRMDYQKGLDLIPGVVNKYKDKVQFVVVGTGDSGMEKAFMALAKNNVGKVAYVAKVDEELAHRVYAGSDIFLMPSRFEPCGLSQMISMRYGTVPIVSRVGGLLDTVKGYDGITKYATGFFILEFSETGIERSLDYALKYYQDKRCWGMLIKNGMEKDFSWTKSAQEYQDLYKKIISK.

Position 15 (K15) interacts with ADP-alpha-D-glucose.

The protein belongs to the glycosyltransferase 1 family. Bacterial/plant glycogen synthase subfamily.

It catalyses the reaction [(1-&gt;4)-alpha-D-glucosyl](n) + ADP-alpha-D-glucose = [(1-&gt;4)-alpha-D-glucosyl](n+1) + ADP + H(+). It functions in the pathway glycan biosynthesis; glycogen biosynthesis. Functionally, synthesizes alpha-1,4-glucan chains using ADP-glucose. The chain is Glycogen synthase from Elusimicrobium minutum (strain Pei191).